The sequence spans 995 residues: UPF0182 protein MMAR_1371 (995 aa).

The next 7 membrane-spanning stretches (helical) occupy residues Val-18–Asp-38, Phe-63–Leu-83, Leu-113–Tyr-133, Phe-175–Ile-195, Ile-210–Asp-230, Lys-259–Leu-279, and Ile-287–Val-307. The disordered stretch occupies residues Ala-900–Ser-948. Residues Gly-928–Pro-941 are compositionally biased toward pro residues.

Belongs to the UPF0182 family.

It is found in the cell membrane. The sequence is that of UPF0182 protein MMAR_1371 from Mycobacterium marinum (strain ATCC BAA-535 / M).